A 1406-amino-acid chain; its full sequence is Enhancer of mRNA-decapping protein 4 (1406 aa).

N-acetylalanine is present on Ala-2. Phosphoserine occurs at positions 3 and 6. The residue at position 125 (Lys-125) is an N6-acetyllysine. 4 WD repeats span residues 174–214 (GFTG…GKIQ), 230–277 (NHFR…SSHN), 295–334 (GHST…QDEP), and 342–393 (PHDG…CLQT). Residues Ser-560, Ser-565, Ser-583, and Ser-585 each carry the phosphoserine modification. 2 disordered regions span residues 604–631 (SLQQ…SSSS) and 667–686 (SLTL…SLLP). Low complexity predominate over residues 609–631 (SASPSSSSSSSSSSSSSSSSSSS). Phosphoserine occurs at positions 680, 712, 727, and 729. Residues 719-744 (EPLGLPQASPSRTRSPDVISSASTAL) form a disordered region. Positions 726–744 (ASPSRTRSPDVISSASTAL) are enriched in polar residues. A Phosphothreonine modification is found at Thr-731. Residues Ser-733 and Ser-745 each carry the phosphoserine modification. 2 disordered regions span residues 782–855 (HLLS…NGLQ) and 873–951 (QRDS…VAEP). Composition is skewed to polar residues over residues 823–832 (EVATPDSQVW) and 841–852 (ETCSTLTESPRN). Thr-826 is subject to Phosphothreonine. Phosphoserine occurs at positions 849 and 876. At Thr-879 the chain carries Phosphothreonine. Ser-880, Ser-884, Ser-892, Ser-895, and Ser-897 each carry phosphoserine. Thr-906 carries the phosphothreonine modification. Residues 971–1030 (HNQEELLQRLCAQLEGLQSTVTDHVERALETRHEQEQRRLERALAEGQQRGGQLQEQLTQ) are a coiled coil. Ser-1385 is subject to Phosphoserine.

This sequence belongs to the WD repeat EDC4 family. In terms of assembly, part of a decapping complex consisting of DCP1A, DCP2, EDC3, EDC4 and probably DDX6. Part of a complex consisting of DCP1A, EDC3, EDC4 and DDX6. Part of a complex consisting of DCP1B, EDC3, EDC4 and DDX6. Interacts with DCP2. Interacts with RC3H1. Interacts with NBDY. Interacts with Tex19.1 and, probably, Tex19.2. Interacts with LSM14A. Interacts with DDX6.

Its subcellular location is the cytoplasm. The protein localises to the P-body. It is found in the nucleus. In terms of biological role, in the process of mRNA degradation, seems to play a role in mRNA decapping. Component of a complex containing DCP2 and DCP1A which functions in decapping of ARE-containing mRNAs. Promotes complex formation between DCP1A and DCP2. Enhances the catalytic activity of DCP2 (in vitro). This chain is Enhancer of mRNA-decapping protein 4, found in Mus musculus (Mouse).